A 366-amino-acid polypeptide reads, in one-letter code: MEVSEGSVTVEVPEERHGASEGSGEGVFYNPVQELNRDITAAVLRTVSDDCDEYLDAMAASGIRSVRAAAAGYDVTACDIDDDAVALTRRNLDRNGVDGTVHHRNVNAHMHESAHDVVDLDPFGTPMAFADAAVRSAGEYLCVTATDTAPLCGAHFESGVRSYDAVPRNTEFHAEMGLRVLLSALVRTAARHDIAAEPVLSHVTSHYVRTYLRVDSGARAADALLEHLGYIDHCQRCLWRDHERGRVPDPTTTCPHCGQSTWTAGPVWLGPAHDAAFVDDVAGAIPDSFGTADKARDLLSTVATELHQPTHYDQHKLYKRWNEPNIAMDDFLAALRAAGHEASRTHYGGTTFKTDADVADIRNAVE.

Residues 1–28 (MEVSEGSVTVEVPEERHGASEGSGEGVF) form a disordered region. In terms of domain architecture, Trm1 methyltransferase spans 1–365 (MEVSEGSVTV…ADVADIRNAV (365 aa)). S-adenosyl-L-methionine contacts are provided by Arg-37, Arg-64, and Asp-79. Residues Cys-234, Cys-237, Cys-254, and Cys-257 each coordinate Zn(2+).

This sequence belongs to the class I-like SAM-binding methyltransferase superfamily. Trm1 family.

The catalysed reaction is guanosine(26) in tRNA + 2 S-adenosyl-L-methionine = N(2)-dimethylguanosine(26) in tRNA + 2 S-adenosyl-L-homocysteine + 2 H(+). Its function is as follows. Dimethylates a single guanine residue at position 26 of a number of tRNAs using S-adenosyl-L-methionine as donor of the methyl groups. This chain is tRNA (guanine(26)-N(2))-dimethyltransferase, found in Natronomonas pharaonis (strain ATCC 35678 / DSM 2160 / CIP 103997 / JCM 8858 / NBRC 14720 / NCIMB 2260 / Gabara) (Halobacterium pharaonis).